Here is an 82-residue protein sequence, read N- to C-terminus: Putative membrane protein insertion efficiency factor (82 aa).

The protein belongs to the UPF0161 family.

It localises to the cell membrane. Could be involved in insertion of integral membrane proteins into the membrane. In Streptococcus thermophilus (strain ATCC BAA-491 / LMD-9), this protein is Putative membrane protein insertion efficiency factor.